Here is a 537-residue protein sequence, read N- to C-terminus: Phosphoenolpyruvate carboxykinase (ATP) (537 aa).

Arg61, Tyr195, and Lys201 together coordinate substrate. ATP contacts are provided by residues Lys201, His220, and 236–244 (GLSGTGKTT). Mn(2+) contacts are provided by Lys201 and His220. Residue Asp257 coordinates Mn(2+). Residues Glu285, Arg323, and Thr448 each contribute to the ATP site. Position 323 (Arg323) interacts with substrate.

The protein belongs to the phosphoenolpyruvate carboxykinase (ATP) family. Requires Mn(2+) as cofactor.

It is found in the cytoplasm. The enzyme catalyses oxaloacetate + ATP = phosphoenolpyruvate + ADP + CO2. It participates in carbohydrate biosynthesis; gluconeogenesis. Functionally, involved in the gluconeogenesis. Catalyzes the conversion of oxaloacetate (OAA) to phosphoenolpyruvate (PEP) through direct phosphoryl transfer between the nucleoside triphosphate and OAA. The chain is Phosphoenolpyruvate carboxykinase (ATP) from Rhodopseudomonas palustris (strain BisA53).